A 411-amino-acid polypeptide reads, in one-letter code: Protein translocase subunit SecY (411 aa).

A run of 10 helical transmembrane segments spans residues 11 to 31 (IIFTLFLLVLARLGIFIPVPG), 52 to 72 (IFSGGGFSTIGIFALGIVPYI), 111 to 131 (ALGWATLQSGAISIWVKPYVF), 135 to 155 (FAFVCESVLALTAGSMIIMWL), 163 to 180 (GIGNGASLLIFQNIVSGL), 197 to 217 (SLKFGLFIAIFLLMIIITICV), 253 to 273 (VMPIVFASASMALPSYLTQII), 291 to 311 (LYLLLYCALILFFSYFYTSIV), 349 to 369 (TFLGASFLFTVALIPFIIEKV), and 377 to 397 (GLGATSLLILVGVAIDTAKQI).

Belongs to the SecY/SEC61-alpha family. Component of the plastid Sec protein translocase complex, which is composed of at least SecY, SecE and SecG.

The protein localises to the plastid. The protein resides in the chloroplast thylakoid membrane. Functionally, the central subunit of the protein translocation channel SecYE. Consists of two halves formed by TMs 1-5 and 6-10. These two domains form a lateral gate at the front which open onto the bilayer between TMs 2 and 7, and are clamped together by SecE at the back. The channel is closed by both a pore ring composed of hydrophobic SecY resides and a short helix (helix 2A) on the extracellular side of the membrane which forms a plug. The chain is Protein translocase subunit SecY from Pyropia yezoensis (Susabi-nori).